We begin with the raw amino-acid sequence, 536 residues long: Protein ST7 homolog (536 aa).

2 helical membrane passes run 3 to 23 (CSWT…LFFL) and 49 to 69 (FYVA…IFEW). Residues 192 to 219 (AEEDTETVAQAENVLRRALRAIENTLST) adopt a coiled-coil conformation. A helical transmembrane segment spans residues 464 to 484 (STLGMLIQTFACLAICILAVL).

It belongs to the ST7 family.

The protein resides in the membrane. This chain is Protein ST7 homolog, found in Caenorhabditis briggsae.